Consider the following 219-residue polypeptide: ATP-dependent dethiobiotin synthetase BioD (219 aa).

Residue 12-17 participates in ATP binding; it reads DLGKTH. Residue Thr16 participates in Mg(2+) binding. Residue Lys37 is part of the active site. Ser41 is a substrate binding site. Residues Asp52, 115–118, and 175–176 contribute to the ATP site; these read EGAG and SE. 2 residues coordinate Mg(2+): Asp52 and Glu115.

Belongs to the dethiobiotin synthetase family. Homodimer. Mg(2+) is required as a cofactor.

The protein localises to the cytoplasm. It carries out the reaction (7R,8S)-7,8-diammoniononanoate + CO2 + ATP = (4R,5S)-dethiobiotin + ADP + phosphate + 3 H(+). The protein operates within cofactor biosynthesis; biotin biosynthesis; biotin from 7,8-diaminononanoate: step 1/2. Functionally, catalyzes a mechanistically unusual reaction, the ATP-dependent insertion of CO2 between the N7 and N8 nitrogen atoms of 7,8-diaminopelargonic acid (DAPA, also called 7,8-diammoniononanoate) to form a ureido ring. The chain is ATP-dependent dethiobiotin synthetase BioD from Caulobacter vibrioides (strain ATCC 19089 / CIP 103742 / CB 15) (Caulobacter crescentus).